The primary structure comprises 442 residues: HTH-type transcriptional regulator NorG (442 aa).

One can recognise an HTH gntR-type domain in the interval 2 to 46 (KIPPQRQLAIQYNVNRVTIIKSIELLEAEGFIYTKVGSGTYVNDY). Positions 6-25 (QRQLAIQYNVNRVTIIKSIE) form a DNA-binding region, H-T-H motif. Position 288 is an N6-(pyridoxal phosphate)lysine (Lys288).

In the C-terminal section; belongs to the class-I pyridoxal-phosphate-dependent aminotransferase family. The cofactor is pyridoxal 5'-phosphate.

Positively regulates the expression of the NorB efflux pump and negatively regulates the expression of the AbcA efflux pump. Binds specifically to the promoters of norA, norB and norC and abcA genes. Could also have an aminotransferase activity. In Staphylococcus aureus (strain Mu50 / ATCC 700699), this protein is HTH-type transcriptional regulator NorG (norG).